Reading from the N-terminus, the 324-residue chain is Ribosomal large subunit pseudouridine synthase D (324 aa).

The region spanning 17–90 (QRLDQALAEL…LPLNIVYEDD (74 aa)) is the S4 RNA-binding domain. The active site involves D138.

This sequence belongs to the pseudouridine synthase RluA family.

It is found in the cytoplasm. It carries out the reaction uridine(1911/1915/1917) in 23S rRNA = pseudouridine(1911/1915/1917) in 23S rRNA. Functionally, responsible for synthesis of pseudouridine from uracil at positions 1911, 1915 and 1917 in 23S ribosomal RNA. The sequence is that of Ribosomal large subunit pseudouridine synthase D (rluD) from Pasteurella multocida (strain Pm70).